The chain runs to 253 residues: Ras-like protein family member 11A-like (253 aa).

GTP-binding positions include Gly-43–Thr-50, Asp-90–Gln-97, and Asn-157–Asp-160. The segment at Gly-213–Gln-233 is disordered.

The protein belongs to the small GTPase superfamily. Ras family.

The protein resides in the nucleus. Its subcellular location is the nucleolus. The enzyme catalyses GTP + H2O = GDP + phosphate + H(+). Its function is as follows. Regulator of rDNA transcription. This Danio rerio (Zebrafish) protein is Ras-like protein family member 11A-like.